A 331-amino-acid polypeptide reads, in one-letter code: uncharacterized protein (331 aa).

This is an uncharacterized protein from Orgyia pseudotsugata (Douglas-fir tussock moth).